We begin with the raw amino-acid sequence, 568 residues long: Sulfite reductase [NADPH] hemoprotein beta-component (568 aa).

[4Fe-4S] cluster contacts are provided by Cys-426, Cys-432, Cys-471, and Cys-475. Cys-475 is a siroheme binding site.

It belongs to the nitrite and sulfite reductase 4Fe-4S domain family. In terms of assembly, alpha(8)-beta(8). The alpha component is a flavoprotein, the beta component is a hemoprotein. Siroheme is required as a cofactor. The cofactor is [4Fe-4S] cluster.

The enzyme catalyses hydrogen sulfide + 3 NADP(+) + 3 H2O = sulfite + 3 NADPH + 4 H(+). Its pathway is sulfur metabolism; hydrogen sulfide biosynthesis; hydrogen sulfide from sulfite (NADPH route): step 1/1. In terms of biological role, component of the sulfite reductase complex that catalyzes the 6-electron reduction of sulfite to sulfide. This is one of several activities required for the biosynthesis of L-cysteine from sulfate. The chain is Sulfite reductase [NADPH] hemoprotein beta-component from Xylella fastidiosa (strain M23).